The primary structure comprises 291 residues: Phosphatidylglycerol--prolipoprotein diacylglyceryl transferase (291 aa).

The next 7 membrane-spanning stretches (helical) occupy residues 21 to 41 (IALH…MWLA), 60 to 80 (LLYA…VLFY), 96 to 116 (WDGG…MWWF), 124 to 144 (FLQV…MGRI), 198 to 218 (SQLY…NLYI), 225 to 245 (GSVS…VEFF), and 258 to 278 (ISMG…MMIW). Arg-143 is a binding site for a 1,2-diacyl-sn-glycero-3-phospho-(1'-sn-glycerol).

This sequence belongs to the Lgt family.

Its subcellular location is the cell inner membrane. It carries out the reaction L-cysteinyl-[prolipoprotein] + a 1,2-diacyl-sn-glycero-3-phospho-(1'-sn-glycerol) = an S-1,2-diacyl-sn-glyceryl-L-cysteinyl-[prolipoprotein] + sn-glycerol 1-phosphate + H(+). It functions in the pathway protein modification; lipoprotein biosynthesis (diacylglyceryl transfer). Its function is as follows. Catalyzes the transfer of the diacylglyceryl group from phosphatidylglycerol to the sulfhydryl group of the N-terminal cysteine of a prolipoprotein, the first step in the formation of mature lipoproteins. In Photorhabdus laumondii subsp. laumondii (strain DSM 15139 / CIP 105565 / TT01) (Photorhabdus luminescens subsp. laumondii), this protein is Phosphatidylglycerol--prolipoprotein diacylglyceryl transferase.